The primary structure comprises 367 residues: Small ribosomal subunit biogenesis GTPase RsgA (367 aa).

One can recognise a CP-type G domain in the interval 112–267 (AEQVLATNVD…VIDTPGLREL (156 aa)). GTP is bound by residues 157–160 (NKSD) and 209–217 (GSSGAGKST). Zn(2+)-binding residues include Cys291, Cys296, His298, and Cys304.

The protein belongs to the TRAFAC class YlqF/YawG GTPase family. RsgA subfamily. As to quaternary structure, monomer. Associates with 30S ribosomal subunit, binds 16S rRNA. Zn(2+) is required as a cofactor.

The protein resides in the cytoplasm. Functionally, one of several proteins that assist in the late maturation steps of the functional core of the 30S ribosomal subunit. Helps release RbfA from mature subunits. May play a role in the assembly of ribosomal proteins into the subunit. Circularly permuted GTPase that catalyzes slow GTP hydrolysis, GTPase activity is stimulated by the 30S ribosomal subunit. The protein is Small ribosomal subunit biogenesis GTPase RsgA of Opitutus terrae (strain DSM 11246 / JCM 15787 / PB90-1).